The sequence spans 478 residues: JmjC domain-containing histone demethylation protein 1 (478 aa).

The PHD-type zinc finger occupies 5 to 68 (SESCPLCKVH…IYHCPECVPK (64 aa)). The JmjC domain occupies 217 to 383 (SDVAKLGVDF…MQLKINEIER (167 aa)). Residue Thr-266 participates in substrate binding. Fe cation contacts are provided by His-269 and Asp-271. Lys-286 serves as a coordination point for substrate. His-351 serves as a coordination point for Fe cation.

It belongs to the JHDM1 histone demethylase family. The cofactor is Fe(2+).

The protein resides in the nucleus. The enzyme catalyses N(6),N(6)-dimethyl-L-lysyl(36)-[histone H3] + 2 2-oxoglutarate + 2 O2 = L-lysyl(36)-[histone H3] + 2 formaldehyde + 2 succinate + 2 CO2. Its function is as follows. Histone demethylase that specifically demethylates 'Lys-36' of histone H3, thereby playing a central role in histone code. In Candida albicans (strain SC5314 / ATCC MYA-2876) (Yeast), this protein is JmjC domain-containing histone demethylation protein 1 (JHD1).